We begin with the raw amino-acid sequence, 649 residues long: Forkhead box protein O1 (649 aa).

Disordered regions lie at residues 1-62 (MAEA…ASAS) and 112-151 (VHSA…SSRR). Phosphothreonine; by PKB/AKT1 or PKB/AKT2 and SGK1 is present on threonine 24. Residues 33–62 (NQSNSTTSSPAPSGSTAANPDATASLASAS) are compositionally biased toward low complexity. The segment covering 116 to 135 (PPQPPPTGPLSQPPPVPPAA) has biased composition (pro residues). Positions 154-248 (WGNLSYADLI…KSGKSPRRRA (95 aa)) form a DNA-binding region, fork-head. DNA-binding regions lie at residues 205 to 212 (NSIRHNLS) and 228 to 231 (SSWW). Serine 206 bears the Phosphoserine; by STK4/MST1 mark. A phosphoserine mark is found at serine 212, serine 228, and serine 229. A disordered region spans residues 228–339 (SSWWMLNPEG…DDLGDGDVHS (112 aa)). An N6-acetyllysine mark is found at lysine 239 and lysine 242. Serine 243 is modified (phosphoserine; by CDK1). An omega-N-methylarginine; by PRMT1 mark is found at arginine 245 and arginine 247. The Nuclear localization signal signature appears at 245 to 247 (RRR). A Phosphoserine; by PKB/AKT1 and SGK1 modification is found at serine 250. Residues lysine 256, lysine 259, and lysine 268 each carry the N6-acetyllysine modification. Basic residues predominate over residues 258–269 (AKSRGRAAKKKA). The tract at residues 277 to 557 (GPGDSPGSQF…RLTPVKTPLQ (281 aa)) is sufficient for interaction with NLK. Residues serine 281 and serine 292 each carry the phosphoserine modification. Over residues 303–320 (NWSTFRPRTSSNASTISG) the composition is skewed to polar residues. Serine 313 bears the Phosphoserine; by PKB/AKT1 mark. Phosphoserine; by CK1 and SGK1 is present on serine 316. Serine 319 carries the post-translational modification Phosphoserine; by CK1. Phosphoserine is present on serine 323. The residue at position 327 (threonine 327) is a Phosphothreonine. The interval 357 to 453 (SEISNPENME…GGLNQYNCAP (97 aa)) is required for interaction with RUNX2. At lysine 417 the chain carries N6-acetyllysine. The Required for interaction with SIRT1 signature appears at 456-460 (LKELL).

Interacts with LRPPRC. Interacts with RUNX2; the interaction inhibits RUNX2 transcriptional activity and mediates the IGF1/insulin-dependent BGLAP expression in osteoblasts Interacts with PPP2R1A; the interaction regulates the dephosphorylation of FOXO1 at Thr-24 and Ser-250 leading to its nuclear import. Interacts with NLK. Interacts with SIRT1; the interaction results in the deacetylation of FOXO1 leading to activation of FOXO1-mediated transcription of genes involved in DNA repair and stress resistance. Binds to CDK1. Interacts with the 14-3-3 proteins, YWHAG and YWHAZ; the interactions require insulin-stimulated phosphorylation on Thr-24, promote nuclear exit and loss of transcriptional activity. Interacts with SKP2; the interaction ubiquitinates FOXO1 leading to its proteasomal degradation. The interaction requires the presence of KRIT1. Interacts (via the C-terminal half) with ATF4 (via its DNA binding domain); the interaction occurs in osteoblasts, regulates glucose homeostasis via suppression of beta-cell proliferation and subsequent decrease in insulin production. Interacts with PRMT1; the interaction methylates FOXO1, prevents PKB/AKT1 phosphorylation and retains FOXO1 in the nucleus. Interacts with EP300 and CREBBP; the interactions acetylate FOXO1. Interacts with SIRT2; the interaction is disrupted in response to oxidative stress or serum deprivation, leading to increased level of acetylated FOXO1, which promotes stress-induced autophagy by stimulating E1-like activating enzyme ATG7. Interacts (acetylated form) with ATG7; the interaction is increased in response to oxidative stress or serum deprivation and promotes the autophagic process leading to cell death. Interacts (acetylated form) with PPARG. Interacts with XBP1; this interaction is direct and leads to FOXO1 ubiquitination and degradation via the proteasome pathway. Interacts (via the Fork-head domain) with CEBPA; the interaction increases when FOXO1 is deacetylated. Interacts with WDFY2. Forms a complex with WDFY2 and AKT1. Interacts with CRY1. Interacts with PPIA/CYPA; the interaction promotes FOXO1 dephosphorylation, nuclear accumulation and transcriptional activity. Interacts with TOX4; FOXO1 is required for full induction of TOX4-dependent activity and the interaction is inhibited by insulin. Interacts (when phosphorylated on Ser-250) with STUB1/CHIP. Phosphorylation by NLK promotes nuclear export and inhibits the transcriptional activity. In response to growth factors, phosphorylation on Thr-24, Ser-250 and Ser-313 by PKB/AKT1 promotes nuclear export and inactivation of transactivational activity. Phosphorylation on Thr-24 is required for binding 14-3-3 proteins. Phosphorylation of Ser-250 decreases DNA-binding activity and promotes the phosphorylation of Thr-24 and Ser-313, permitting phosphorylation of Ser-316 and Ser-319, probably by CDK1, leading to nuclear exclusion and loss of function. Stress signals, such as response to oxygen or nitric oxide, attenuate the PKB/AKT1-mediated phosphorylation leading to nuclear retention. Phosphorylation of Ser-323 is independent of IGF1 and leads to reduced function. Dephosphorylated on Thr-24 and Ser-250 by PP2A in beta-cells under oxidative stress leading to nuclear retention. Phosphorylation of Ser-243 by CDK1 disrupts binding of 14-3-3 proteins leading to nuclear accumulation and has no effect on DNA binding nor transcriptional activity. Phosphorylation by STK4/MST1 on Ser-206, upon oxidative stress, inhibits binding to 14-3-3 proteins and nuclear export. PPIA/CYPA promotes its dephosphorylation on Ser-250. In terms of processing, ubiquitinated by SKP2. Ubiquitination leads to proteasomal degradation. Ubiquitinated by STUB1/CHIP; when Ser-250 is phosphorylated. Post-translationally, methylation inhibits AKT1-mediated phosphorylation at Ser-250 and is increased by oxidative stress. Acetylated. Acetylation at Lys-256 and Lys-268 are necessary for autophagic cell death induction. Deacetylated by SIRT2 in response to oxidative stress or serum deprivation, thereby negatively regulating FOXO1-mediated autophagic cell death. Once in the nucleus, acetylated by CREBBP/EP300. Acetylation diminishes the interaction with target DNA and attenuates the transcriptional activity. It increases the phosphorylation at Ser-250. Deacetylation by SIRT1 results in reactivation of the transcriptional activity. Oxidative stress by hydrogen peroxide treatment appears to promote deacetylation and uncoupling of insulin-induced phosphorylation. By contrast, resveratrol acts independently of acetylation. Acetylated at Lys-417, promoting its localization to the nucleus and transcription factor activity. Deacetylation at Lys-417 by SIRT6, promotes its translocation into the cytoplasm, preventing its transcription factor activity. Deacetylation and subsequent inhibition by SIRT6 has different effects depending on cell types: it inhibits gluconeogenesis in hepatocytes, promotes glucose sensing in pancreatic beta-cells and regulates lipid catabolism in brown adipocytes. As to expression, expressed in the internal elastic lamina of the carotid artery (at protein level).

The protein resides in the cytoplasm. Its subcellular location is the nucleus. Transcription factor that is the main target of insulin signaling and regulates metabolic homeostasis in response to oxidative stress. Binds to the insulin response element (IRE) with consensus sequence 5'-TT[G/A]TTTTG-3' and the related Daf-16 family binding element (DBE) with consensus sequence 5'-TT[G/A]TTTAC-3'. Activity suppressed by insulin. Main regulator of redox balance and osteoblast numbers and controls bone mass. Orchestrates the endocrine function of the skeleton in regulating glucose metabolism. Also acts as a key regulator of chondrogenic commitment of skeletal progenitor cells in response to lipid availability: when lipids levels are low, translocates to the nucleus and promotes expression of SOX9, which induces chondrogenic commitment and suppresses fatty acid oxidation. Acts synergistically with ATF4 to suppress osteocalcin/BGLAP activity, increasing glucose levels and triggering glucose intolerance and insulin insensitivity. Also suppresses the transcriptional activity of RUNX2, an upstream activator of osteocalcin/BGLAP. Acts as an inhibitor of glucose sensing in pancreatic beta cells by acting as a transcription repressor and suppressing expression of PDX1. In hepatocytes, promotes gluconeogenesis by acting together with PPARGC1A and CEBPA to activate the expression of genes such as IGFBP1, G6PC1 and PCK1. Also promotes gluconeogenesis by directly promoting expression of PPARGC1A and G6PC1. Important regulator of cell death acting downstream of CDK1, PKB/AKT1 and STK4/MST1. Promotes neural cell death. Mediates insulin action on adipose tissue. Regulates the expression of adipogenic genes such as PPARG during preadipocyte differentiation and, adipocyte size and adipose tissue-specific gene expression in response to excessive calorie intake. Regulates the transcriptional activity of GADD45A and repair of nitric oxide-damaged DNA in beta-cells. Required for the autophagic cell death induction in response to starvation or oxidative stress in a transcription-independent manner. Mediates the function of MLIP in cardiomyocytes hypertrophy and cardiac remodeling. Positive regulator of apoptosis in cardiac smooth muscle cells as a result of its transcriptional activation of pro-apoptotic genes. Regulates endothelial cell (EC) viability and apoptosis in a PPIA/CYPA-dependent manner via transcription of CCL2 and BCL2L11 which are involved in EC chemotaxis and apoptosis. The sequence is that of Forkhead box protein O1 (Foxo1) from Rattus norvegicus (Rat).